Reading from the N-terminus, the 192-residue chain is Probable nicotinate-nucleotide adenylyltransferase (192 aa).

Belongs to the NadD family.

It carries out the reaction nicotinate beta-D-ribonucleotide + ATP + H(+) = deamido-NAD(+) + diphosphate. It participates in cofactor biosynthesis; NAD(+) biosynthesis; deamido-NAD(+) from nicotinate D-ribonucleotide: step 1/1. In terms of biological role, catalyzes the reversible adenylation of nicotinate mononucleotide (NaMN) to nicotinic acid adenine dinucleotide (NaAD). The protein is Probable nicotinate-nucleotide adenylyltransferase of Rhizobium etli (strain CIAT 652).